The sequence spans 295 residues: MQHLIRTSDFTKEEILDIFEDARGFLDFKPCEILKGKIIVTLFFENSTRTRSSFEIAAKRLGAEIVNLDVGTSSTKKGETMYDTVANINAMGPDAIVIRHSECGLPESLIGYVDCPIINAGDGRHSHPTQALLDLFTIYEHFNGQTEGKKIAIVGDVRNSRVAGSNRRLLPRFGIDVNLVAPDCFKYEGNEFKQFNTIAEVIDDMDVVMSLRSQLERHNITYFESLQEYAKDFCITPELMEGRDFLLLHPGPVNRNIDISDEVLKDPRCKVLEQVRNGVAVRAAILKKLILNNKN.

Carbamoyl phosphate-binding residues include Arg-49 and Thr-50. Residue Lys-77 coordinates L-aspartate. Carbamoyl phosphate is bound by residues Arg-99, His-127, and Gln-130. Positions 161 and 212 each coordinate L-aspartate. Positions 251 and 252 each coordinate carbamoyl phosphate.

It belongs to the aspartate/ornithine carbamoyltransferase superfamily. ATCase family. Heterododecamer (2C3:3R2) of six catalytic PyrB chains organized as two trimers (C3), and six regulatory PyrI chains organized as three dimers (R2).

It carries out the reaction carbamoyl phosphate + L-aspartate = N-carbamoyl-L-aspartate + phosphate + H(+). It functions in the pathway pyrimidine metabolism; UMP biosynthesis via de novo pathway; (S)-dihydroorotate from bicarbonate: step 2/3. In terms of biological role, catalyzes the condensation of carbamoyl phosphate and aspartate to form carbamoyl aspartate and inorganic phosphate, the committed step in the de novo pyrimidine nucleotide biosynthesis pathway. In Aliarcobacter butzleri (strain RM4018) (Arcobacter butzleri), this protein is Aspartate carbamoyltransferase catalytic subunit.